A 136-amino-acid chain; its full sequence is Large ribosomal subunit protein uL22 (136 aa).

This sequence belongs to the universal ribosomal protein uL22 family. As to quaternary structure, part of the 50S ribosomal subunit.

This protein binds specifically to 23S rRNA; its binding is stimulated by other ribosomal proteins, e.g. L4, L17, and L20. It is important during the early stages of 50S assembly. It makes multiple contacts with different domains of the 23S rRNA in the assembled 50S subunit and ribosome. Its function is as follows. The globular domain of the protein is located near the polypeptide exit tunnel on the outside of the subunit, while an extended beta-hairpin is found that lines the wall of the exit tunnel in the center of the 70S ribosome. The chain is Large ribosomal subunit protein uL22 from Bacteroides fragilis (strain YCH46).